The following is a 490-amino-acid chain: Argininosuccinate lyase (490 aa).

Disordered stretches follow at residues 426–452 and 469–490; these read DPES…LSAA and ALAT…TAPE. The span at 440–452 shows a compositional bias: low complexity; it reads PAPESMAAALSAA. Residues 469–480 are compositionally biased toward basic and acidic residues; sequence ALATAADERERV.

Belongs to the lyase 1 family. Argininosuccinate lyase subfamily.

The protein localises to the cytoplasm. It carries out the reaction 2-(N(omega)-L-arginino)succinate = fumarate + L-arginine. It participates in amino-acid biosynthesis; L-arginine biosynthesis; L-arginine from L-ornithine and carbamoyl phosphate: step 3/3. This chain is Argininosuccinate lyase, found in Natronomonas pharaonis (strain ATCC 35678 / DSM 2160 / CIP 103997 / JCM 8858 / NBRC 14720 / NCIMB 2260 / Gabara) (Halobacterium pharaonis).